The chain runs to 357 residues: Fulicin peptides (357 aa).

A signal peptide spans 1-17; the sequence is MQPTVLLILMTSCLTYQ. The propeptide occupies 18-119; sequence VIADKPKGNH…VDGSQGHLEP (102 aa). At N123 the chain carries D-asparagine. V126 bears the Valine amide mark. The propeptide occupies 130–194; sequence NTLPEEAGSF…YNTMNEDEAS (65 aa). 2 positions are modified to valine amide: V201 and V209. Leucine amide is present on residues L217 and L226. Isoleucine amide is present on residues I233 and I242. A valine amide mark is found at V250 and V259. The propeptide occupies 263 to 298; sequence NQGVFTVSPSSTKISFDDNYLPYLSSVDAGDLSDVN. A Leucine amide modification is found at L305. A propeptide spanning residues 311–357 is cleaved from the precursor; it reads TAEQDETSQRSNERLVALLQNTGFRKRLSRMLQNQRLVEHYPEFIGK.

As to expression, found in central ganglia and the ventricles and atria of the heart.

Potentiates tetanic contraction of the penis retractor muscle at very low concentrations, and also shows modulatory actions on the activity of the buccal and ventricular muscles and the central ganglionic neurons. This Lissachatina fulica (Giant African land snail) protein is Fulicin peptides.